Reading from the N-terminus, the 688-residue chain is Polyphosphate kinase (688 aa).

Asparagine 45 contributes to the ATP binding site. 2 residues coordinate Mg(2+): arginine 375 and arginine 405. One can recognise a PLD phosphodiesterase domain in the interval 430 to 464 (PGLKIHAKLFLISRKEGDDVVRYAHIGTGNFNEKT). Histidine 435 functions as the Phosphohistidine intermediate in the catalytic mechanism. Residues tyrosine 468, arginine 564, and histidine 592 each coordinate ATP.

The protein belongs to the polyphosphate kinase 1 (PPK1) family. Requires Mg(2+) as cofactor. An intermediate of this reaction is the autophosphorylated ppk in which a phosphate is covalently linked to a histidine residue through a N-P bond.

It carries out the reaction [phosphate](n) + ATP = [phosphate](n+1) + ADP. Catalyzes the reversible transfer of the terminal phosphate of ATP to form a long-chain polyphosphate (polyP). The sequence is that of Polyphosphate kinase from Salmonella typhimurium (strain LT2 / SGSC1412 / ATCC 700720).